A 253-amino-acid polypeptide reads, in one-letter code: Tryptophan synthase alpha chain (253 aa).

Catalysis depends on proton acceptor residues glutamate 47 and aspartate 58.

Belongs to the TrpA family. As to quaternary structure, tetramer of two alpha and two beta chains.

The catalysed reaction is (1S,2R)-1-C-(indol-3-yl)glycerol 3-phosphate + L-serine = D-glyceraldehyde 3-phosphate + L-tryptophan + H2O. Its pathway is amino-acid biosynthesis; L-tryptophan biosynthesis; L-tryptophan from chorismate: step 5/5. Its function is as follows. The alpha subunit is responsible for the aldol cleavage of indoleglycerol phosphate to indole and glyceraldehyde 3-phosphate. The polypeptide is Tryptophan synthase alpha chain (Lactococcus lactis subsp. cremoris (strain SK11)).